We begin with the raw amino-acid sequence, 277 residues long: Chitosanase (277 aa).

Positions 1–35 (MKISMQKADFWKKAAISLLVFTMFFTLMMSETVFA) are cleaved as a signal peptide. Catalysis depends on glutamate 54, which acts as the Proton donor. Aspartate 70 (nucleophile) is an active-site residue.

Belongs to the glycosyl hydrolase 46 family.

The protein resides in the secreted. It catalyses the reaction Endohydrolysis of beta-(1-&gt;4)-linkages between D-glucosamine residues in a partly acetylated chitosan.. Functionally, aids in the defense against invading fungal pathogens by degrading their cell wall chitosan. The polypeptide is Chitosanase (csn) (Bacillus subtilis (strain 168)).